The sequence spans 342 residues: Ribosomal RNA small subunit methyltransferase C (342 aa).

Belongs to the methyltransferase superfamily. RsmC family. In terms of assembly, monomer.

Its subcellular location is the cytoplasm. It catalyses the reaction guanosine(1207) in 16S rRNA + S-adenosyl-L-methionine = N(2)-methylguanosine(1207) in 16S rRNA + S-adenosyl-L-homocysteine + H(+). In terms of biological role, specifically methylates the guanine in position 1207 of 16S rRNA in the 30S particle. In Salmonella choleraesuis (strain SC-B67), this protein is Ribosomal RNA small subunit methyltransferase C.